Reading from the N-terminus, the 205-residue chain is MKIANTFIKRGAAGGLDLSQAPGVTLTLAERRRSRQRLDLDEGRGELGMAIERGQTLRDGDVLVAEDGTYVVVRAALEDVARVTAATPWQLARAAYHLGNRHVLLEIAERHLQFEYDAVLIDMLAQLGGVTATRLRAVFEPDVGAYGGGHRHGHDESFGDDYALAQAAYHAHEAHPHAHSHAGGHGHVHSGHGHGGKHGEHDAES.

The segment at 171–205 (AHEAHPHAHSHAGGHGHVHSGHGHGGKHGEHDAES) is disordered. A compositionally biased stretch (basic residues) spans 177 to 196 (HAHSHAGGHGHVHSGHGHGG).

It belongs to the UreE family.

It is found in the cytoplasm. Functionally, involved in urease metallocenter assembly. Binds nickel. Probably functions as a nickel donor during metallocenter assembly. In Bordetella bronchiseptica (strain ATCC BAA-588 / NCTC 13252 / RB50) (Alcaligenes bronchisepticus), this protein is Urease accessory protein UreE.